The chain runs to 312 residues: Malate dehydrogenase (312 aa).

Residues 7–13 and Asp-34 each bind NAD(+); that span reads GAAGGIG. 2 residues coordinate substrate: Arg-81 and Arg-87. NAD(+)-binding positions include Asn-94 and 117 to 119; that span reads ITN. The substrate site is built by Asn-119 and Arg-153. The Proton acceptor role is filled by His-177. Met-227 is a binding site for NAD(+).

The protein belongs to the LDH/MDH superfamily. MDH type 1 family. As to quaternary structure, homodimer.

The catalysed reaction is (S)-malate + NAD(+) = oxaloacetate + NADH + H(+). In terms of biological role, catalyzes the reversible oxidation of malate to oxaloacetate. This is Malate dehydrogenase from Photorhabdus laumondii subsp. laumondii (strain DSM 15139 / CIP 105565 / TT01) (Photorhabdus luminescens subsp. laumondii).